The primary structure comprises 410 residues: Elongation factor Tu, chloroplastic (410 aa).

Residues 10-213 enclose the tr-type G domain; it reads KPHLNIGTIG…TVDEYIPTPK (204 aa). Positions 19–26 are G1; it reads GHVDHGKT. A GTP-binding site is contributed by 19-26; the sequence is GHVDHGKT. T26 provides a ligand contact to Mg(2+). A G2 region spans residues 60–64; sequence GITIN. Residues 81–84 form a G3 region; sequence DCPG. Residues 81-85 and 136-139 contribute to the GTP site; these read DCPGH and NKAD. Positions 136–139 are G4; it reads NKAD. The segment at 174 to 176 is G5; sequence SAI.

This sequence belongs to the TRAFAC class translation factor GTPase superfamily. Classic translation factor GTPase family. EF-Tu/EF-1A subfamily.

The protein resides in the plastid. It localises to the chloroplast. The enzyme catalyses GTP + H2O = GDP + phosphate + H(+). In terms of biological role, GTP hydrolase that promotes the GTP-dependent binding of aminoacyl-tRNA to the A-site of ribosomes during protein biosynthesis. This is Elongation factor Tu, chloroplastic (tufA) from Codium fragile (Dead man's fingers).